A 522-amino-acid polypeptide reads, in one-letter code: Probable protein kinase UbiB (522 aa).

The 379-residue stretch at 119 to 497 (SFERVPVASA…QRRTNRLLQS (379 aa)) folds into the Protein kinase domain. Residues 125-133 (VASASIAQV) and lysine 151 each bind ATP. Aspartate 286 acts as the Proton acceptor in catalysis. A helical transmembrane segment spans residues 496-516 (QSIIYGGMGFVLGLLALQFLI).

Belongs to the ABC1 family. UbiB subfamily.

The protein resides in the cell inner membrane. It participates in cofactor biosynthesis; ubiquinone biosynthesis [regulation]. Its function is as follows. Is probably a protein kinase regulator of UbiI activity which is involved in aerobic coenzyme Q (ubiquinone) biosynthesis. This is Probable protein kinase UbiB from Paracidovorax citrulli (strain AAC00-1) (Acidovorax citrulli).